A 481-amino-acid chain; its full sequence is Keratin, type II cuticular Hb1 (481 aa).

The interval 1–106 (MTCGSGFCGR…PNAQCVKHEE (106 aa)) is head. Residues 106 to 417 (EKEQIKCLNS…RLLEGEEQRL (312 aa)) form the IF rod domain. The interval 107 to 141 (KEQIKCLNSKFAAFIDKVRFLEQQNKLLETKWQFY) is coil 1A. Positions 142–151 (QNRKCCESNM) are linker 1. A coil 1B region spans residues 152 to 252 (EPLFEGYIEA…YDEETRILHS (101 aa)). Lysine 212 is covalently cross-linked (Glycyl lysine isopeptide (Lys-Gly) (interchain with G-Cter in SUMO1)). Positions 253-269 (HISDTSIVVKMDNSRDL) are linker 12. The tract at residues 270–413 (NMDCVVAEIK…TTYRRLLEGE (144 aa)) is coil 2. Positions 414 to 481 (EQRLCEGVGA…GSAVSCGRKC (68 aa)) are tail.

This sequence belongs to the intermediate filament family. Heterotetramer of two type I and two type II keratins. As to expression, expressed in dorsal skin.

The polypeptide is Keratin, type II cuticular Hb1 (Mus musculus (Mouse)).